Here is a 117-residue protein sequence, read N- to C-terminus: Large ribosomal subunit protein uL18 (117 aa).

The protein belongs to the universal ribosomal protein uL18 family. In terms of assembly, part of the 50S ribosomal subunit; part of the 5S rRNA/L5/L18/L25 subcomplex. Contacts the 5S and 23S rRNAs.

In terms of biological role, this is one of the proteins that bind and probably mediate the attachment of the 5S RNA into the large ribosomal subunit, where it forms part of the central protuberance. This chain is Large ribosomal subunit protein uL18, found in Acidithiobacillus ferrooxidans (strain ATCC 23270 / DSM 14882 / CIP 104768 / NCIMB 8455) (Ferrobacillus ferrooxidans (strain ATCC 23270)).